The sequence spans 516 residues: tRNA-2-methylthio-N(6)-dimethylallyladenosine synthase (516 aa).

In terms of domain architecture, MTTase N-terminal spans 17–133; the sequence is RSFEVRTFGC…LPSLLSRSEH (117 aa). Residues Cys26, Cys62, Cys96, Cys170, Cys174, and Cys177 each contribute to the [4Fe-4S] cluster site. The Radical SAM core domain occupies 156–392; that stretch reads RESAYAGWVS…LALQERISTE (237 aa). The 72-residue stretch at 395–466 folds into the TRAM domain; that stretch reads AKLIGTEVEL…PFFLIADSGV (72 aa). 2 disordered regions span residues 409 to 438 and 492 to 516; these read SGGRKNDKTQRMTGRSRDGRLVHFDPQGHV and GLGLPSIGSPAQKRSETSKSSGCGC. A compositionally biased stretch (basic and acidic residues) spans 412-438; the sequence is RKNDKTQRMTGRSRDGRLVHFDPQGHV.

This sequence belongs to the methylthiotransferase family. MiaB subfamily. Monomer. Requires [4Fe-4S] cluster as cofactor.

It is found in the cytoplasm. It carries out the reaction N(6)-dimethylallyladenosine(37) in tRNA + (sulfur carrier)-SH + AH2 + 2 S-adenosyl-L-methionine = 2-methylsulfanyl-N(6)-dimethylallyladenosine(37) in tRNA + (sulfur carrier)-H + 5'-deoxyadenosine + L-methionine + A + S-adenosyl-L-homocysteine + 2 H(+). Catalyzes the methylthiolation of N6-(dimethylallyl)adenosine (i(6)A), leading to the formation of 2-methylthio-N6-(dimethylallyl)adenosine (ms(2)i(6)A) at position 37 in tRNAs that read codons beginning with uridine. In Corynebacterium diphtheriae (strain ATCC 700971 / NCTC 13129 / Biotype gravis), this protein is tRNA-2-methylthio-N(6)-dimethylallyladenosine synthase.